A 163-amino-acid chain; its full sequence is MSFNFRIGQGYDVHAFGPGEHVMLGGVRVAHSHGVLAHSDGDVVLHALCDAMLGALALGDIGRHFPPSDERWKDADSAQFLQHCDGLLRERGWRVGNADITVICERPKVGPHAVAMRERIAGLLAIELDAVSVKATTSEQLGFTGRGEGIAAQAAVLLGRIAA.

2 residues coordinate a divalent metal cation: aspartate 12 and histidine 14. Residues 12–14 and 38–39 each bind 4-CDP-2-C-methyl-D-erythritol 2-phosphate; these read DVH and HS. Residue histidine 46 coordinates a divalent metal cation. 4-CDP-2-C-methyl-D-erythritol 2-phosphate contacts are provided by residues 60 to 62, 136 to 139, phenylalanine 143, and arginine 146; these read DIG and TTSE.

Belongs to the IspF family. As to quaternary structure, homotrimer. Requires a divalent metal cation as cofactor.

The catalysed reaction is 4-CDP-2-C-methyl-D-erythritol 2-phosphate = 2-C-methyl-D-erythritol 2,4-cyclic diphosphate + CMP. The protein operates within isoprenoid biosynthesis; isopentenyl diphosphate biosynthesis via DXP pathway; isopentenyl diphosphate from 1-deoxy-D-xylulose 5-phosphate: step 4/6. Its function is as follows. Involved in the biosynthesis of isopentenyl diphosphate (IPP) and dimethylallyl diphosphate (DMAPP), two major building blocks of isoprenoid compounds. Catalyzes the conversion of 4-diphosphocytidyl-2-C-methyl-D-erythritol 2-phosphate (CDP-ME2P) to 2-C-methyl-D-erythritol 2,4-cyclodiphosphate (ME-CPP) with a corresponding release of cytidine 5-monophosphate (CMP). The sequence is that of 2-C-methyl-D-erythritol 2,4-cyclodiphosphate synthase from Xanthomonas oryzae pv. oryzae (strain MAFF 311018).